The sequence spans 261 residues: Small ribosomal subunit protein eS1 (261 aa).

The segment covering 1–18 has biased composition (basic residues); it reads MAVGKNKRISKGKKGGKK. The disordered stretch occupies residues 1 to 20; it reads MAVGKNKRISKGKKGGKKKA.

It belongs to the eukaryotic ribosomal protein eS1 family. As to quaternary structure, component of the small ribosomal subunit. Mature ribosomes consist of a small (40S) and a large (60S) subunit. The 40S subunit contains about 33 different proteins and 1 molecule of RNA (18S). The 60S subunit contains about 49 different proteins and 3 molecules of RNA (25S, 5.8S and 5S).

The protein resides in the cytoplasm. The sequence is that of Small ribosomal subunit protein eS1 from Catharanthus roseus (Madagascar periwinkle).